The chain runs to 204 residues: MAVPKEVSFLASLLVLGILLLHVDAKACSQRNAKEPICTNCCAGRKGCNYYSADGTFICEGESDPNNPKPCTLNCDPRIFYSKCPRSEGNAENRICTNCCAGRKGCNYYSADGTFICEGESDPNNPKPCTLNCDPRIFYSKCPRSEASAEQPICTNCCAGLKGCNYYNADGTFICEGESDPNHPKACPKNCDPNIAYSLCLYEK.

Positions 1–25 (MAVPKEVSFLASLLVLGILLLHVDA) are cleaved as a signal peptide. Repeat copies occupy residues 25–67 (AKAC…DPNN), 68–125 (PKPC…DPNN), and 126–183 (PKPC…DPNH). Intrachain disulfides connect cysteine 28–cysteine 100, cysteine 38–cysteine 75, cysteine 41–cysteine 59, cysteine 42–cysteine 71, cysteine 48–cysteine 84, and cysteine 99–cysteine 117. Residues 184–204 (PKACPKNCDPNIAYSLCLYEK) form a 4; truncated repeat.

The protein belongs to the protease inhibitor I20 (potato type II proteinase inhibitor) family.

In Capsicum annuum (Capsicum pepper), this protein is Wound-induced proteinase inhibitor 2 (PIN2).